The following is a 330-amino-acid chain: MHFIDEVKIYIKGGNGGNGCISFHREKFVDRGGPDGGDGGFGGSVIFRSNHHINTLVNYRYQQHFIAENGGNGKGSNRSGKSGKSLILDVPIGTQIFSEDGNILLHDFTEDEKSFEIIKGGCGGLGNSHFKTSVNQAPRKRTEGEIAQEMWIHLRLKLLSDVGLVGLPNAGKSTFLSVVTAAKPKIADYPFTTLVPNLGVVYINDEEFVIADIPGLIAGAHQGHGLGDKFLKHIERCNVLIHLIDGSSHNVIADYDTVRFELESYSDYLKNKIEIICINKCDVLTDEEIQKKIKKLQRVTNKVVHPISTYTNLGVNKIVKLALEIIKNQI.

The Obg domain occupies 1–159 (MHFIDEVKIY…MWIHLRLKLL (159 aa)). The OBG-type G domain maps to 160–327 (SDVGLVGLPN…IVKLALEIIK (168 aa)). GTP contacts are provided by residues 166 to 173 (GLPNAGKS), 191 to 195 (FTTLV), 212 to 215 (DIPG), 279 to 282 (NKCD), and 308 to 310 (STY). Mg(2+) is bound by residues S173 and T193.

It belongs to the TRAFAC class OBG-HflX-like GTPase superfamily. OBG GTPase family. In terms of assembly, monomer. Mg(2+) serves as cofactor.

The protein localises to the cytoplasm. Its function is as follows. An essential GTPase which binds GTP, GDP and possibly (p)ppGpp with moderate affinity, with high nucleotide exchange rates and a fairly low GTP hydrolysis rate. Plays a role in control of the cell cycle, stress response, ribosome biogenesis and in those bacteria that undergo differentiation, in morphogenesis control. The chain is GTPase Obg from Rickettsia typhi (strain ATCC VR-144 / Wilmington).